The following is a 761-amino-acid chain: Zinc finger protein 287 (761 aa).

The SCAN box domain maps to Arg49 to Leu131. A disordered region spans residues Glu134–His154. One can recognise a KRAB domain in the interval Met170–Pro238. 14 C2H2-type zinc fingers span residues Tyr368–His390, Tyr396–His418, Tyr424–His446, Tyr452–His474, Tyr480–His502, Tyr508–His530, Tyr536–His558, Tyr564–His586, Tyr592–His614, Tyr620–His642, Phe648–His670, Tyr676–His698, Tyr704–His726, and Tyr732–His754.

The protein belongs to the krueppel C2H2-type zinc-finger protein family.

The protein localises to the nucleus. Functionally, may be involved in transcriptional regulation. This chain is Zinc finger protein 287, found in Homo sapiens (Human).